We begin with the raw amino-acid sequence, 488 residues long: MADHGASNPGSLDKHGTNEGALWGGRFSGGPSEAMFALSVSTHFDWVLAPYDVLASKAHAKVLNKAGLLSDADLETMLGGLDQLGRDVADGSFVPASSDEDVHGAMERGLIDRVGPEVGGRLRAGRSRNDQVAAMFRMWIRDAIRDIAVQVTQLIDALSEQAKAHPDAIMPGKTHSQAAQPILLAHSLLAHAQPLLRDIQRLQDLDKRLAVSPYGSGALAGSSLKLDPEAIAEELGFDSAADNSLDGTSSRDFASETAFVLAQIAVDMSRLAEEIIYWCTPEYGYVTLSDSWSTGSSIMPQKKNPDVPELVRGKTGRLIGNLSGLMATLKGLPLAYNRDLQEDKEPIVDSVAQLNLLLPAMTGLVSTLTFHENRMRELAPAGFTLATDLAEWMVRQGVPFREAHEASGSCVRIAESRGVDLIDLTDEELASVDSRLTPEVREVLTIDGAVASRSTRGGTAGVRVAEQRERVEKLSGELRGWAETPVRG.

Belongs to the lyase 1 family. Argininosuccinate lyase subfamily.

The protein localises to the cytoplasm. It carries out the reaction 2-(N(omega)-L-arginino)succinate = fumarate + L-arginine. Its pathway is amino-acid biosynthesis; L-arginine biosynthesis; L-arginine from L-ornithine and carbamoyl phosphate: step 3/3. This Corynebacterium jeikeium (strain K411) protein is Argininosuccinate lyase.